We begin with the raw amino-acid sequence, 218 residues long: Cytochrome b6 (218 aa).

A helical transmembrane segment spans residues 35–55; it reads IFYCLGGITLVCFLIQFATGF. C38 lines the heme c pocket. 2 residues coordinate heme b: H89 and H103. 3 helical membrane-spanning segments follow: residues 93–113, 119–139, and 189–209; these read ASMMVLMLILHVFRVYLTGGF, LTWVTGVTMAVITVSFGVTGY, and LHTFVLPWLLAVFMLAHFLMI. 2 residues coordinate heme b: H190 and H205.

Belongs to the cytochrome b family. PetB subfamily. As to quaternary structure, the 4 large subunits of the cytochrome b6-f complex are cytochrome b6, subunit IV (17 kDa polypeptide, PetD), cytochrome f and the Rieske protein, while the 4 small subunits are PetG, PetL, PetM and PetN. The complex functions as a dimer. Heme b is required as a cofactor. It depends on heme c as a cofactor.

It localises to the cellular thylakoid membrane. Its function is as follows. Component of the cytochrome b6-f complex, which mediates electron transfer between photosystem II (PSII) and photosystem I (PSI), cyclic electron flow around PSI, and state transitions. This chain is Cytochrome b6, found in Synechococcus sp. (strain RCC307).